The sequence spans 420 residues: MSDNGPQNQRSAPRITFGGPSDSTDNNQDGGRSGARPKQRRPQGLPNNTASWFTALTQHGKEELRFPRGQGVPINTNSGKDDQIGYYRRATRRVRGGDGKMKKLSPRWYFYYLGTGPEASLPYGANKEGIVWVATEGALNTPKDHIGTRNPNNNAAIVLQLPQGTTLPKGFYAEGSRGGSQASSRSSSRSRGNSRNSTPGSSRGNSPARMASGSGETALALLLLDRLNQLESKVSGKGQQQQGQTVTKKSAAEASKKPRQKRTATKSYNVTQAFGRRGPEQTQGNFGDQDLIRQGTDYKYWPQIAQFAPSASAFFGMSRIGMEVTPLGTWLTYHGAIKLDDKDPQFKDNVILLNKHIDAYKAFPPTEPKKDKKKKTDEAQPLPQRKKQPTVTLLPAADMDDFSRQLQNSMSGASADSTQA.

Polar residues-rich tracts occupy residues 1-11 (MSDNGPQNQRS) and 21-30 (SDSTDNNQDG). Positions 1–49 (MSDNGPQNQRSAPRITFGGPSDSTDNNQDGGRSGARPKQRRPQGLPNNT) are disordered. An RNA-binding region spans residues 41–186 (RPQGLPNNTA…RGGSQASSRS (146 aa)). The CoV N NTD domain occupies 48–175 (NTASWFTALT…TLPKGFYAEG (128 aa)). R92, R107, and R149 together coordinate RNA. Disordered stretches follow at residues 168–214 (PKGF…ASGS), 233–286 (KVSG…QGNF), and 362–420 (AFPP…STQA). Residue S176 is modified to Phosphoserine; by host. Low complexity-rich tracts occupy residues 179-206 (GSQASSRSSSRSRGNSRNSTPGSSRGNS) and 233-249 (KVSGKGQQQQGQTVTKK). A CoV N CTD domain is found at 247–364 (TKKSAAEASK…KHIDAYKAFP (118 aa)). The interval 258–361 (PRQKRTATKS…LLNKHIDAYK (104 aa)) is dimerization. Residues 367–378 (EPKKDKKKKTDE) show a composition bias toward basic and acidic residues. Polar residues predominate over residues 404 to 420 (RQLQNSMSGASADSTQA).

The protein belongs to the betacoronavirus nucleocapsid protein family. Homooligomer. Both monomeric and oligomeric forms interact with RNA. Interacts with protein M. Interacts with NSP3; this interaction serves to tether the genome to the newly translated replicase-transcriptase complex at a very early stage of infection. Post-translationally, ADP-ribosylated. The ADP-ribosylation is retained in the virion during infection. In terms of processing, phosphorylated on serine and threonine residues.

It is found in the virion. The protein resides in the host endoplasmic reticulum-Golgi intermediate compartment. It localises to the host Golgi apparatus. Functionally, packages the positive strand viral genome RNA into a helical ribonucleocapsid (RNP) and plays a fundamental role during virion assembly through its interactions with the viral genome and membrane protein M. Plays an important role in enhancing the efficiency of subgenomic viral RNA transcription as well as viral replication. This Rhinolophus macrotis (Big-eared horseshoe bat) protein is Nucleoprotein.